The chain runs to 292 residues: ATP synthase gamma chain (292 aa).

It belongs to the ATPase gamma chain family. F-type ATPases have 2 components, CF(1) - the catalytic core - and CF(0) - the membrane proton channel. CF(1) has five subunits: alpha(3), beta(3), gamma(1), delta(1), epsilon(1). CF(0) has three main subunits: a, b and c.

The protein resides in the cell inner membrane. Produces ATP from ADP in the presence of a proton gradient across the membrane. The gamma chain is believed to be important in regulating ATPase activity and the flow of protons through the CF(0) complex. This chain is ATP synthase gamma chain, found in Methylobacterium nodulans (strain LMG 21967 / CNCM I-2342 / ORS 2060).